Consider the following 600-residue polypeptide: Sulfite reductase [NADPH] flavoprotein alpha-component (600 aa).

The region spanning 63 to 201 (ITLISASQTG…AAQAWRQRVV (139 aa)) is the Flavodoxin-like domain. Residues 69-74 (SQTGNA), 116-119 (STQG), and 152-161 (LGDTSYEHFC) contribute to the FMN site. Residues 235–449 (ESPLTATLSV…IEHNDNFRLP (215 aa)) form the FAD-binding FR-type domain. FAD-binding positions include T323, A357, 387–390 (RLYS), 405–407 (TVG), and 420–423 (GGAS). NADP(+) is bound by residues 520-521 (SR), 526-530 (KIYVQ), and D562. Y600 is an FAD binding site.

Belongs to the NADPH-dependent sulphite reductase flavoprotein subunit CysJ family. This sequence in the N-terminal section; belongs to the flavodoxin family. It in the C-terminal section; belongs to the flavoprotein pyridine nucleotide cytochrome reductase family. As to quaternary structure, alpha(8)-beta(8). The alpha component is a flavoprotein, the beta component is a hemoprotein. FAD is required as a cofactor. FMN serves as cofactor.

It catalyses the reaction hydrogen sulfide + 3 NADP(+) + 3 H2O = sulfite + 3 NADPH + 4 H(+). The protein operates within sulfur metabolism; hydrogen sulfide biosynthesis; hydrogen sulfide from sulfite (NADPH route): step 1/1. Component of the sulfite reductase complex that catalyzes the 6-electron reduction of sulfite to sulfide. This is one of several activities required for the biosynthesis of L-cysteine from sulfate. The flavoprotein component catalyzes the electron flow from NADPH -&gt; FAD -&gt; FMN to the hemoprotein component. In Cronobacter sakazakii (strain ATCC BAA-894) (Enterobacter sakazakii), this protein is Sulfite reductase [NADPH] flavoprotein alpha-component.